Reading from the N-terminus, the 398-residue chain is Phosphoglycerate kinase (398 aa).

Residues 20-22 (DFN), R35, 58-61 (HLGK), R118, and R155 each bind substrate. ATP is bound by residues K208, G296, E327, and 354 to 357 (GGDS).

Belongs to the phosphoglycerate kinase family. Monomer.

The protein resides in the cytoplasm. It carries out the reaction (2R)-3-phosphoglycerate + ATP = (2R)-3-phospho-glyceroyl phosphate + ADP. It participates in carbohydrate degradation; glycolysis; pyruvate from D-glyceraldehyde 3-phosphate: step 2/5. In Fusobacterium nucleatum subsp. nucleatum (strain ATCC 25586 / DSM 15643 / BCRC 10681 / CIP 101130 / JCM 8532 / KCTC 2640 / LMG 13131 / VPI 4355), this protein is Phosphoglycerate kinase.